We begin with the raw amino-acid sequence, 175 residues long: Pre-mRNA-splicing factor SNT309 (175 aa).

In terms of assembly, belongs to the NTC complex (or PRP19-associated complex), composed of at least CEF1, CLF1, ISY1, NTC20, SNT309, SYF1, SYF2, and PRP19. The NTC complex associates with the spliceosome after the release of the U1 and U4 snRNAs and forms the CWC spliceosome subcomplex (or CEF1-associated complex) reminiscent of a late-stage spliceosome composed also of the U2, U5 and U6 snRNAs and at least BUD13, BUD31, BRR2, CDC40, CUS1, CWC2, CWC15, CWC21, CWC22, CWC23, CWC24, CWC25, CWC27, ECM2, HSH155, IST3, LEA1, MSL1, PRP8, PRP9, PRP11, PRP21, PRP22, PRP45, PRP46, SLU7, SMB1, SMD1, SMD2, SMD3, SMX2, SMX3, SNU114, SPP2, RSE1 and YJU2. Interacts with PRP19.

The protein resides in the nucleus. Its function is as follows. Involved in pre-mRNA splicing by stabilizing the NTC (or PRP19-associated complex). As a component of the NTC complex, associates to the spliceosome to mediate conformational rearrangement or to stabilize the structure of the spliceosome after U4 snRNA dissociation, which leads to spliceosome maturation. In Saccharomyces cerevisiae (strain ATCC 204508 / S288c) (Baker's yeast), this protein is Pre-mRNA-splicing factor SNT309 (SNT309).